A 360-amino-acid chain; its full sequence is RNA demethylase ALKBH5 (360 aa).

The disordered stretch occupies residues 1–53; the sequence is MSATYTDLREKLQSLNRDSPKEVRKRKQPASDTEEEDEAGSEPEAEEEEARKV. Positions 7-22 are enriched in basic and acidic residues; the sequence is DLREKLQSLNRDSPKE. Residues 32–48 are compositionally biased toward acidic residues; the sequence is DTEEEDEAGSEPEAEEE. Tyrosine 107 is an active-site residue. 5 residues coordinate 2-oxoglutarate: asparagine 161, tyrosine 163, histidine 172, histidine 234, and arginine 245. A disulfide bridge connects residues cysteine 198 and cysteine 235. The disordered stretch occupies residues 261–360; the sequence is EMKSLSSSYQ…PVRKVKMRRH (100 aa). The span at 264–280 shows a compositional bias: polar residues; the sequence is SLSSSYQPERLQGSNRQ. The segment covering 281-290 has biased composition (basic residues); sequence HILKPKRSHR. Basic and acidic residues-rich tracts occupy residues 291–312 and 330–340; these read KADPDAAHRPRILEMDKEENRR and YWRRSHDHVDT.

It belongs to the alkB family. Monomer. The cofactor is Fe(2+).

It localises to the nucleus speckle. It carries out the reaction an N(6)-methyladenosine in mRNA + 2-oxoglutarate + O2 = an adenosine in mRNA + formaldehyde + succinate + CO2. Its function is as follows. Dioxygenase that specifically demethylates N(6)-methyladenosine (m6A) RNA, the most prevalent internal modification of messenger RNA (mRNA) in higher eukaryotes. Demethylates RNA by oxidative demethylation, which requires molecular oxygen, alpha-ketoglutarate and iron. Demethylation of m6A mRNA affects mRNA processing, translation and export. The sequence is that of RNA demethylase ALKBH5 (alkbh5) from Xenopus laevis (African clawed frog).